A 128-amino-acid polypeptide reads, in one-letter code: Glycine cleavage system H protein (128 aa).

Residues 25 to 107 form the Lipoyl-binding domain; that stretch reads TFKVGITDHA…YEAGWLFTVR (83 aa). An N6-lipoyllysine modification is found at lysine 66.

The protein belongs to the GcvH family. As to quaternary structure, the glycine cleavage system is composed of four proteins: P, T, L and H. Requires (R)-lipoate as cofactor.

Its function is as follows. The glycine cleavage system catalyzes the degradation of glycine. The H protein shuttles the methylamine group of glycine from the P protein to the T protein. The polypeptide is Glycine cleavage system H protein (Kocuria rhizophila (strain ATCC 9341 / DSM 348 / NBRC 103217 / DC2201)).